Reading from the N-terminus, the 708-residue chain is Ion-translocating oxidoreductase complex subunit C (708 aa).

4Fe-4S ferredoxin-type domains follow at residues 369-397 and 407-436; these read GEPQ…QQLY and KATT…VQYF. Residues C377, C380, C383, C387, C416, C419, C422, and C426 each contribute to the [4Fe-4S] cluster site. Residues 663–684 form a disordered region; it reads KARKLEQQQTNAEPEEQVDPRK.

Belongs to the 4Fe4S bacterial-type ferredoxin family. RnfC subfamily. In terms of assembly, the complex is composed of six subunits: RsxA, RsxB, RsxC, RsxD, RsxE and RsxG. It depends on [4Fe-4S] cluster as a cofactor.

Its subcellular location is the cell inner membrane. Part of a membrane-bound complex that couples electron transfer with translocation of ions across the membrane. Required to maintain the reduced state of SoxR. This chain is Ion-translocating oxidoreductase complex subunit C, found in Shigella boydii serotype 18 (strain CDC 3083-94 / BS512).